We begin with the raw amino-acid sequence, 318 residues long: Ribosomal RNA small subunit methyltransferase H (318 aa).

Residues 37–39 (GGH), D57, F83, D104, and Q111 contribute to the S-adenosyl-L-methionine site.

This sequence belongs to the methyltransferase superfamily. RsmH family.

It is found in the cytoplasm. The catalysed reaction is cytidine(1402) in 16S rRNA + S-adenosyl-L-methionine = N(4)-methylcytidine(1402) in 16S rRNA + S-adenosyl-L-homocysteine + H(+). Specifically methylates the N4 position of cytidine in position 1402 (C1402) of 16S rRNA. In Neisseria gonorrhoeae (strain NCCP11945), this protein is Ribosomal RNA small subunit methyltransferase H.